The chain runs to 323 residues: tRNA dimethylallyltransferase (323 aa).

27–34 (GPTGSGKT) contacts ATP. A substrate-binding site is contributed by 29 to 34 (TGSGKT). 2 interaction with substrate tRNA regions span residues 52 to 55 (DSRQ) and 176 to 180 (QRIVR).

The protein belongs to the IPP transferase family. As to quaternary structure, monomer. The cofactor is Mg(2+).

The catalysed reaction is adenosine(37) in tRNA + dimethylallyl diphosphate = N(6)-dimethylallyladenosine(37) in tRNA + diphosphate. Catalyzes the transfer of a dimethylallyl group onto the adenine at position 37 in tRNAs that read codons beginning with uridine, leading to the formation of N6-(dimethylallyl)adenosine (i(6)A). The polypeptide is tRNA dimethylallyltransferase (Desulfovibrio desulfuricans (strain ATCC 27774 / DSM 6949 / MB)).